The sequence spans 3214 residues: Ciliogenesis and planar polarity effector 1 (3214 aa).

The next 2 helical transmembrane spans lie at 593–613 (KLML…LQFI) and 632–652 (AWVL…YWDM). 11 disordered regions span residues 1496–1523 (VGKK…ETPG), 1644–1667 (GNQS…PLQS), 1879–1991 (DGRH…HRAQ), 2047–2142 (FGES…FPPA), 2214–2241 (SLSD…SSHC), 2398–2440 (GITQ…ISND), 2491–2529 (GSHD…GHEP), 2622–2650 (TFQS…QSGE), 2824–2855 (VSLQ…HSSQ), 3037–3127 (TAPA…CRED), and 3158–3181 (MSPA…VSES). Residues 1512–1523 (NSQRKEDDETPG) are compositionally biased toward basic and acidic residues. Residues 1932 to 1942 (QCSRKEPRDAS) show a composition bias toward basic and acidic residues. Composition is skewed to polar residues over residues 1943–1953 (VDTNLTEQKGA), 1971–1984 (NGAQ…QKTQ), and 2047–2068 (FGES…SRQR). A compositionally biased stretch (basic and acidic residues) spans 2079–2099 (CTREPGKNSPADHKRISRPDQ). The segment covering 2215 to 2241 (LSDSCQPPVSQRTVHTTLPSPSDSSHC) has biased composition (polar residues). Basic and acidic residues predominate over residues 2500–2514 (DPDKEGPSQKADSES). Composition is skewed to polar residues over residues 2515–2524 (SKNPQATAAS) and 2622–2634 (TFQS…STRG). Residues 2830 to 2848 (EDVEEQKDAEETSETEFSE) are compositionally biased toward acidic residues. The span at 3090 to 3107 (RGSSQLRGSQPPCQSQKP) shows a compositional bias: polar residues.

In terms of assembly, interacts with FUZ; INTU and WDPCP; the interactors are proposed to form the core CPLANE (ciliogenesis and planar polarity effectors) complex.

The protein localises to the membrane. The protein resides in the cell projection. It is found in the cilium. Its function is as follows. Involved in ciliogenesis. Involved in the establishment of cell polarity required for directional cell migration. Proposed to act in association with the CPLANE (ciliogenesis and planar polarity effectors) complex. Involved in recruitment of peripheral IFT-A proteins to basal bodies. This chain is Ciliogenesis and planar polarity effector 1, found in Mus musculus (Mouse).